A 464-amino-acid polypeptide reads, in one-letter code: Pup--protein ligase (464 aa).

A Mg(2+)-binding site is contributed by glutamate 14. Arginine 58 contributes to the ATP binding site. Tyrosine 60 serves as a coordination point for Mg(2+). Aspartate 62 (proton acceptor) is an active-site residue. Mg(2+) is bound at residue glutamate 68. Positions 71 and 430 each coordinate ATP.

This sequence belongs to the Pup ligase/Pup deamidase family. Pup-conjugating enzyme subfamily.

It catalyses the reaction ATP + [prokaryotic ubiquitin-like protein]-L-glutamate + [protein]-L-lysine = ADP + phosphate + N(6)-([prokaryotic ubiquitin-like protein]-gamma-L-glutamyl)-[protein]-L-lysine.. It participates in protein degradation; proteasomal Pup-dependent pathway. It functions in the pathway protein modification; protein pupylation. Its function is as follows. Catalyzes the covalent attachment of the prokaryotic ubiquitin-like protein modifier Pup to the proteasomal substrate proteins, thereby targeting them for proteasomal degradation. This tagging system is termed pupylation. The ligation reaction involves the side-chain carboxylate of the C-terminal glutamate of Pup and the side-chain amino group of a substrate lysine. This Micrococcus luteus (strain ATCC 4698 / DSM 20030 / JCM 1464 / CCM 169 / CCUG 5858 / IAM 1056 / NBRC 3333 / NCIMB 9278 / NCTC 2665 / VKM Ac-2230) (Micrococcus lysodeikticus) protein is Pup--protein ligase.